Here is a 494-residue protein sequence, read N- to C-terminus: Subtilisin-like serine protease Pen ch 18.0101 (494 aa).

The N-terminal stretch at 1 to 16 (MKGFLSLTLLPLLVAA) is a signal peptide. A propeptide spans 17 to 136 (SPVAVNSIHN…IEKDSEVRTM (120 aa)) (removed in mature form). Residues 43 to 136 (SYIVVFKKHV…IEKDSEVRTM (94 aa)) form the Inhibitor I9 domain. The Peptidase S8 domain occupies 146–448 (PWGLARISHR…GGSANYTKIL (303 aa)). IgE-binding stretches follow at residues 180-198 (VIDTGANVKHVDFEGRANW) and 209-231 (EDGNGHGTHCSGTIAGKKFGVAK). Residues aspartate 182 and histidine 214 each act as charge relay system in the active site. 2 N-linked (GlcNAc...) asparagine glycosylation sites follow: asparagine 244 and asparagine 280. Serine 376 serves as the catalytic Charge relay system. N-linked (GlcNAc...) asparagine glycosylation occurs at asparagine 443. The propeptide at 454-494 (KAHNAETTVEDRIGIIIDSAEKAFHKELGAIYSEIKDAVSV) is removed in mature form.

It belongs to the peptidase S8 family.

Serine protease. In Penicillium rubens, this protein is Subtilisin-like serine protease Pen ch 18.0101.